A 371-amino-acid polypeptide reads, in one-letter code: Cyanide hydratase (371 aa).

Positions 8 to 286 (YKAAAVQAEP…EGLMFVEIDL (279 aa)) constitute a CN hydrolase domain. Catalysis depends on E48, which acts as the Proton acceptor. K130 is a catalytic residue. The active-site Nucleophile is C165. Positions 326 to 356 (DGGIGTYNTQDRVGLNRPLDAPKVDGPSGVS) are disordered.

The protein belongs to the carbon-nitrogen hydrolase superfamily. Nitrilase family. As to quaternary structure, oligomer of dimers, forming left-handed helical fibers.

It catalyses the reaction formamide = hydrogen cyanide + H2O. Catalyzes the hydration of cyanide to formamide. Degradation of cyanide may be important for plant pathogenic fungi in infection of cyanogenic plants. Can also transform some nitriles like 2-cyanopyridine and fumaronitrile and has a minor activity with 4-cyanophenyl acetonitrile (4-CPA). The chain is Cyanide hydratase from Botryotinia fuckeliana (strain T4) (Noble rot fungus).